The primary structure comprises 260 residues: Fructose import ATP-binding protein FrcA (260 aa).

In terms of domain architecture, ABC transporter spans 7 to 251; sequence LTARGLVKRY…DAVAFMTGAK (245 aa). Position 39-46 (39-46) interacts with ATP; the sequence is GDNGAGKS.

It belongs to the ABC transporter superfamily. The complex is composed of two ATP-binding proteins (FrcA), two transmembrane proteins (FrcC) and a solute-binding protein (FrcB).

It is found in the cell inner membrane. It catalyses the reaction D-fructose(out) + ATP + H2O = D-fructose(in) + ADP + phosphate + H(+). Part of the high-affinity ABC transporter complex FrcBCA involved in fructose uptake. Is also a high-affinity transporter for ribose and mannose. Responsible for energy coupling to the transport system. This chain is Fructose import ATP-binding protein FrcA, found in Rhizobium meliloti (Ensifer meliloti).